Here is a 360-residue protein sequence, read N- to C-terminus: NADP-dependent alcohol dehydrogenase 6 (360 aa).

Cysteine 46 provides a ligand contact to Zn(2+). Glycine 47 and histidine 51 together coordinate NADP(+). The Zn(2+) site is built by histidine 68, cysteine 100, cysteine 103, cysteine 106, and cysteine 114. Serine 131 is modified (phosphoserine). Cysteine 163 contributes to the Zn(2+) binding site. NADP(+) is bound by residues leucine 188, glycine 190, isoleucine 191, serine 210, arginine 211, lysine 215, cysteine 250, serine 252, threonine 255, aspartate 256, isoleucine 275, isoleucine 277, tyrosine 298, serine 299, leucine 301, and arginine 348. Serine 359 bears the Phosphoserine mark.

The protein belongs to the zinc-containing alcohol dehydrogenase family. In terms of assembly, homodimer. Zn(2+) is required as a cofactor.

It localises to the cytoplasm. The protein localises to the nucleus. The enzyme catalyses a primary alcohol + NADP(+) = an aldehyde + NADPH + H(+). The catalysed reaction is (E)-cinnamyl alcohol + NADP(+) = (E)-cinnamaldehyde + NADPH + H(+). It catalyses the reaction hexan-1-ol + NADP(+) = hexanal + NADPH + H(+). It carries out the reaction 3-methylbutanol + NADP(+) = 3-methylbutanal + NADPH + H(+). The enzyme catalyses S-nitroso-CoA + NADPH + H(+) = sulfinamide-CoA + NADP(+). Its function is as follows. NADP-dependent, medium-chain alcohol dehydrogenase with a broad substrate specificity. Aldehydes exhibited 50-12000 times higher catalytic efficiency than the corresponding alcohols, therefore the major function of the enzyme is as an aldehyde reductase. The enzyme is active towards aromatic and aliphatic (linear and branched-chain) aldehydes. The enzyme is very active towards aromatic aldehydes, such as cinnamaldehyde, benzaldehyde and substituted benzaldehydes, such as veratraldehyde and panisaldehyde. It exhibits low activity towards substituted cinnamaldehydes, such as coniferaldehyde and sinapaldehyde. The enzyme has no activity with ketones, such as acetone or cyclohexanone. For the reverse reaction, linear and branched-chain primary alcohols are substrates, whereas very low activity is found with secondary alcohols, such as butan-2-ol. The enzyme may be physiologically involved in several steps of the lignin degradation pathway, initiated by other microorganisms, in the synthesis of fusel alcohols, products derived from the aminoacidic metabolism, and in the homeostasis of NADP(H). Has the ability to reduce 5-hydroxymethyl furfural (HMF), a furan derivative which is formed during the hydrolysis of lignocellulosic materials, to 5-hydroxymethylfurfuryl alcohol, thereby alleviating the inhibition of the fermentation of lignocellulose hydrolysates by HMF during fuel ethanol production. Also acts as an inhibitor of protein S-nitrosylation by mediating degradation of S-nitroso-coenzyme A (S-nitroso-CoA), a cofactor required to S-nitrosylate proteins. In Saccharomyces cerevisiae (strain ATCC 204508 / S288c) (Baker's yeast), this protein is NADP-dependent alcohol dehydrogenase 6.